A 392-amino-acid polypeptide reads, in one-letter code: S-adenosylmethionine synthase (392 aa).

Residue H17 coordinates ATP. D19 contacts Mg(2+). A K(+)-binding site is contributed by E45. Residues E58 and Q102 each coordinate L-methionine. Residues Q102–A112 are flexible loop. Residues D169–K171, K235–F236, D244, R250–K251, A267, and K271 contribute to the ATP site. L-methionine is bound at residue D244. K275 contributes to the L-methionine binding site.

The protein belongs to the AdoMet synthase family. As to quaternary structure, homotetramer; dimer of dimers. It depends on Mg(2+) as a cofactor. K(+) is required as a cofactor.

It is found in the cytoplasm. It carries out the reaction L-methionine + ATP + H2O = S-adenosyl-L-methionine + phosphate + diphosphate. Its pathway is amino-acid biosynthesis; S-adenosyl-L-methionine biosynthesis; S-adenosyl-L-methionine from L-methionine: step 1/1. Its function is as follows. Catalyzes the formation of S-adenosylmethionine (AdoMet) from methionine and ATP. The overall synthetic reaction is composed of two sequential steps, AdoMet formation and the subsequent tripolyphosphate hydrolysis which occurs prior to release of AdoMet from the enzyme. The sequence is that of S-adenosylmethionine synthase from Methylobacterium nodulans (strain LMG 21967 / CNCM I-2342 / ORS 2060).